Consider the following 260-residue polypeptide: Putative hydro-lyase Dshi_0610 (260 aa).

It belongs to the D-glutamate cyclase family.

This is Putative hydro-lyase Dshi_0610 from Dinoroseobacter shibae (strain DSM 16493 / NCIMB 14021 / DFL 12).